Here is a 358-residue protein sequence, read N- to C-terminus: Heterogeneous nuclear ribonucleoprotein A2 homolog 2 (358 aa).

RRM domains are found at residues 9 to 92 and 100 to 179; these read RKLF…ESAK and KKLF…LSKQ. Disordered stretches follow at residues 182–217 and 333–358; these read QDVQNTRNNRGGNFGFGDSRGGGNFGSGPGGNFRGG and YGGGNYGPGNGSGASGGGGYGGRNRY. Positions 193-217 are enriched in gly residues; sequence GNFGFGDSRGGGNFGSGPGGNFRGG. A nuclear targeting sequence region spans residues 309–352; sequence QQSSSYGPMKSGGNFGGNRSMGGPYGGGNYGPGNGSGASGGGGY.

The protein resides in the nucleus. Its function is as follows. Forms complexes (ribonucleosomes) with at least 20 other different hnRNP and heterogeneous nuclear RNA in the nucleus. In Xenopus laevis (African clawed frog), this protein is Heterogeneous nuclear ribonucleoprotein A2 homolog 2.